Here is a 101-residue protein sequence, read N- to C-terminus: Ubiquitin-related modifier 1 (101 aa).

At G101 the chain carries 1-thioglycine. G101 participates in a covalent cross-link: Glycyl lysine isopeptide (Gly-Lys) (interchain with K-? in acceptor proteins).

This sequence belongs to the URM1 family. C-terminal thiocarboxylation occurs in 2 steps, it is first acyl-adenylated (-COAMP) via the hesA/moeB/thiF part of UBA4, then thiocarboxylated (-COSH) via the rhodanese domain of UBA4.

The protein resides in the cytoplasm. It functions in the pathway tRNA modification; 5-methoxycarbonylmethyl-2-thiouridine-tRNA biosynthesis. In terms of biological role, acts as a sulfur carrier required for 2-thiolation of mcm(5)S(2)U at tRNA wobble positions of cytosolic tRNA(Lys), tRNA(Glu) and tRNA(Gln). Serves as sulfur donor in tRNA 2-thiolation reaction by being thiocarboxylated (-COSH) at its C-terminus by the MOCS3 homolog UBA4. The sulfur is then transferred to tRNA to form 2-thiolation of mcm(5)S(2)U. Prior mcm(5) tRNA modification by the elongator complex is required for 2-thiolation. Also acts as a ubiquitin-like protein (UBL) that is covalently conjugated via an isopeptide bond to lysine residues of target proteins such as AHP1. The thiocarboxylated form serves as substrate for conjugation and oxidative stress specifically induces the formation of UBL-protein conjugates. The chain is Ubiquitin-related modifier 1 from Debaryomyces hansenii (strain ATCC 36239 / CBS 767 / BCRC 21394 / JCM 1990 / NBRC 0083 / IGC 2968) (Yeast).